Reading from the N-terminus, the 455-residue chain is Indoleacetamide hydrolase (455 aa).

Catalysis depends on charge relay system residues Lys-71 and Ser-146. Ser-170 (acyl-ester intermediate) is an active-site residue.

Belongs to the amidase family.

Its pathway is plant hormone metabolism; auxin biosynthesis. Functionally, hydrolyzes indole-3-acetamide (IAM) into indole-3-acetic acid (IAA). The sequence is that of Indoleacetamide hydrolase (iaaH) from Pseudomonas savastanoi (Pseudomonas syringae pv. savastanoi).